Consider the following 410-residue polypeptide: Probable ATP-dependent RNA helicase MG308 (410 aa).

The Helicase ATP-binding domain maps to 26–179 (VFKLWPFQNI…KKQVINTKVI (154 aa)). Residue 39–46 (AETGSGKT) coordinates ATP. The short motif at 126 to 129 (DEID) is the DEID box element. One can recognise a Helicase C-terminal domain in the interval 190 to 357 (LVKHFVVHLN…DLKFLTENNQ (168 aa)).

This sequence belongs to the DEAD box helicase family.

The enzyme catalyses ATP + H2O = ADP + phosphate + H(+). This Mycoplasma genitalium (strain ATCC 33530 / DSM 19775 / NCTC 10195 / G37) (Mycoplasmoides genitalium) protein is Probable ATP-dependent RNA helicase MG308.